Consider the following 448-residue polypeptide: Methylenetetrahydrofolate--tRNA-(uracil-5-)-methyltransferase TrmFO (448 aa).

13 to 18 (GAGLAG) lines the FAD pocket.

Belongs to the MnmG family. TrmFO subfamily. FAD is required as a cofactor.

It localises to the cytoplasm. The catalysed reaction is uridine(54) in tRNA + (6R)-5,10-methylene-5,6,7,8-tetrahydrofolate + NADH + H(+) = 5-methyluridine(54) in tRNA + (6S)-5,6,7,8-tetrahydrofolate + NAD(+). The enzyme catalyses uridine(54) in tRNA + (6R)-5,10-methylene-5,6,7,8-tetrahydrofolate + NADPH + H(+) = 5-methyluridine(54) in tRNA + (6S)-5,6,7,8-tetrahydrofolate + NADP(+). In terms of biological role, catalyzes the folate-dependent formation of 5-methyl-uridine at position 54 (M-5-U54) in all tRNAs. This Streptococcus pyogenes serotype M28 (strain MGAS6180) protein is Methylenetetrahydrofolate--tRNA-(uracil-5-)-methyltransferase TrmFO.